A 92-amino-acid chain; its full sequence is RNA-binding protein Hfq (92 aa).

A Sm domain is found at 9-68 (DPFLNALRRERVPVSIYLVNGIKLQGQVESFDQFVILLKNTVSQMVYKHAISTVVPSRPF). A compositionally biased stretch (polar residues) spans 73 to 82 (HQATNAQAGY). The tract at residues 73–92 (HQATNAQAGYNAQHDDGDEK) is disordered.

It belongs to the Hfq family. Homohexamer.

RNA chaperone that binds small regulatory RNA (sRNAs) and mRNAs to facilitate mRNA translational regulation in response to envelope stress, environmental stress and changes in metabolite concentrations. Also binds with high specificity to tRNAs. This chain is RNA-binding protein Hfq, found in Shewanella pealeana (strain ATCC 700345 / ANG-SQ1).